We begin with the raw amino-acid sequence, 724 residues long: Pediocin PA-1 transport/processing ATP-binding protein PedD (724 aa).

One can recognise a Peptidase C39 domain in the interval 13–140; that stretch reads QVDENDCGLA…KEWTQIAIII (128 aa). C19 is a catalytic residue. 6 helical membrane passes run 170-190, 207-227, 284-304, 307-327, 396-416, and 426-446; these read IGLI…GAYF, LSLV…INYI, TTLT…FLAY, INLF…VWLF, IKAA…TFFV, and LLTY…IINL. An ABC transmembrane type-1 domain is found at 170 to 452; it reads IGLIITAAAI…IINLQPKLQA (283 aa). Positions 486-722 constitute an ABC transporter domain; the sequence is IEVNHVSFNY…NGYYARLIHN (237 aa). 519 to 526 provides a ligand contact to ATP; that stretch reads GMSGSGKT.

It belongs to the ABC transporter superfamily. Pediocin PA-1 exporter (TC 3.A.1.112.2) family.

It is found in the cell membrane. In terms of biological role, involved in the export process of the bacteriocin pediocin PA-1/AcH. Is also essential for pediocin production. This chain is Pediocin PA-1 transport/processing ATP-binding protein PedD (pedD), found in Pediococcus acidilactici.